A 283-amino-acid chain; its full sequence is Thymidylate synthase (283 aa).

Arg-22 is a binding site for dUMP. The Nucleophile role is filled by Cys-160. Residues 180–183, Asn-191, and 221–223 each bind dUMP; these read RSCD and HIY. A (6R)-5,10-methylene-5,6,7,8-tetrahydrofolate-binding site is contributed by Asp-183. A (6R)-5,10-methylene-5,6,7,8-tetrahydrofolate-binding site is contributed by Ser-282.

The protein belongs to the thymidylate synthase family. Bacterial-type ThyA subfamily. Homodimer.

The protein resides in the cytoplasm. The catalysed reaction is dUMP + (6R)-5,10-methylene-5,6,7,8-tetrahydrofolate = 7,8-dihydrofolate + dTMP. Its pathway is pyrimidine metabolism; dTTP biosynthesis. Functionally, catalyzes the reductive methylation of 2'-deoxyuridine-5'-monophosphate (dUMP) to 2'-deoxythymidine-5'-monophosphate (dTMP) while utilizing 5,10-methylenetetrahydrofolate (mTHF) as the methyl donor and reductant in the reaction, yielding dihydrofolate (DHF) as a by-product. This enzymatic reaction provides an intracellular de novo source of dTMP, an essential precursor for DNA biosynthesis. The protein is Thymidylate synthase of Vibrio parahaemolyticus serotype O3:K6 (strain RIMD 2210633).